Consider the following 474-residue polypeptide: Hepatocyte nuclear factor 4-alpha (474 aa).

The nuclear receptor DNA-binding region spans 57-132 (SALCAICGDR…AGMKKEAVQN (76 aa)). 2 consecutive NR C4-type zinc fingers follow at residues 60-80 (CAICGDRATGKHYGASSCDGC) and 96-120 (CRFSRQCVVDKDKRNQCRYCRLKKC). A phosphoserine mark is found at S142 and S143. Y144 carries the phosphotyrosine modification. Positions 147-377 (SSLPSINALL…NLLQEMLLGG (231 aa)) constitute an NR LBD domain. Residue T166 is modified to Phosphothreonine. S167 is subject to Phosphoserine. Glycyl lysine isopeptide (Lys-Gly) (interchain with G-Cter in ubiquitin) cross-links involve residues K234 and K307. A Phosphoserine; by AMPK modification is found at S313. The short motif at 368–376 (NLLQEMLLG) is the 9aaTAD element. The tract at residues 419 to 447 (EWPRPRGQAATPETPQPSPPGGSGSEPYK) is disordered. A phosphothreonine mark is found at T429 and T432. Phosphoserine is present on S436. K458 carries the N6-acetyllysine modification.

The protein belongs to the nuclear hormone receptor family. NR2 subfamily. In terms of assembly, homodimerization is required for HNF4-alpha to bind to its recognition site. Interacts with CLOCK, BMAL1, CRY1, CRY2, PER1 and PER2. Interacts with NR0B2/SHP; the resulting heterodimer is transcriptionally inactive. Interacts with DDX3X; this interaction disrupts the interaction between HNF4 and NR0B2 that forms inactive heterodimers and enhances the formation of active HNF4 homodimers. In terms of processing, phosphorylated on tyrosine residue(s); phosphorylation is important for its DNA-binding activity. Phosphorylation may directly or indirectly play a regulatory role in the subnuclear distribution. Phosphorylation at Ser-313 by AMPK reduces the ability to form homodimers and bind DNA. Post-translationally, acetylation at Lys-458 lowers transcriptional activation by about two-fold.

It is found in the nucleus. Functionally, transcriptional regulator which controls the expression of hepatic genes during the transition of endodermal cells to hepatic progenitor cells, facilitating the recruitment of RNA pol II to the promoters of target genes. Activates the transcription of CYP2C38. Represses the CLOCK-BMAL1 transcriptional activity and is essential for circadian rhythm maintenance and period regulation in the liver and colon cells. The protein is Hepatocyte nuclear factor 4-alpha (HNF4A) of Homo sapiens (Human).